A 191-amino-acid chain; its full sequence is Elongation factor P-like protein (191 aa).

It belongs to the elongation factor P family.

The sequence is that of Elongation factor P-like protein from Photobacterium profundum (strain SS9).